Consider the following 1049-residue polypeptide: DEAD-box ATP-dependent RNA helicase 42 (1049 aa).

Disordered regions lie at residues 1 to 279 and 299 to 358; these read MGSS…DEID and MPAA…DDEE. The segment covering 64–106 has biased composition (basic and acidic residues); the sequence is KERDREERKAREREEREKEKERERARRREERDREERSRRREAA. The span at 118–131 shows a compositional bias: basic residues; it reads RKRRRRSSHHHHHH. Basic and acidic residues-rich tracts occupy residues 161–170 and 181–199; these read KKEEEQKQLD and KEWQ…REQE. Over residues 201 to 214 the composition is skewed to low complexity; it reads AGVGTSAAAAAAPA. Positions 229-239 are enriched in acidic residues; the sequence is DGEESDEEGNQ. The span at 262-272 shows a compositional bias: low complexity; the sequence is NGGDNANGANA. Residues 304-313 show a composition bias toward basic and acidic residues; that stretch reads VDDKNDKSAK. Acidic residues predominate over residues 335-358; the sequence is EDSDSDYADDEDDEGGSEDEDDEE. The short motif at 424-452 is the Q motif element; it reads KTWVQSGLTSKLLDTIKKLGFEKPMSIQA. In terms of domain architecture, Helicase ATP-binding spans 455–633; the sequence is LPIIMSGRDC…RKVLTKPVEI (179 aa). Position 468-475 (468-475) interacts with ATP; sequence AKTGSGKT. The short motif at 581 to 584 is the DEAD box element; that stretch reads DEAD. The 162-residue stretch at 644–805 folds into the Helicase C-terminal domain; that stretch reads DITQLVEVRP…AVPEDLKGLA (162 aa). Positions 816–868 are disordered; sequence TEQAHGTGYGGSGFKFNEEEDEARKSAKKAQAREYGYEEDKSDSDSDEEGGVR. The span at 855 to 864 shows a compositional bias: acidic residues; sequence DKSDSDSDEE. The stretch at 1012–1037 forms a coiled coil; sequence TELSVKKAKAELKRVLEDCANHALNL.

The protein belongs to the DEAD box helicase family. DDX46/PRP5 subfamily.

It carries out the reaction ATP + H2O = ADP + phosphate + H(+). The chain is DEAD-box ATP-dependent RNA helicase 42 from Oryza sativa subsp. japonica (Rice).